Consider the following 425-residue polypeptide: Elongation factor 1-alpha (425 aa).

The tr-type G domain maps to 5–221 (KPHMNLAVIG…NALSEPEKPT (217 aa)). Residues 14 to 21 (GHIDHGKS) are G1. 14–21 (GHIDHGKS) lines the GTP pocket. Ser-21 contacts Mg(2+). Positions 70-74 (GITID) are G2. The interval 91 to 94 (DCPG) is G3. Residues 91 to 95 (DCPGH) and 146 to 149 (NKMD) each bind GTP. The segment at 146–149 (NKMD) is G4. The tract at residues 185-187 (SAF) is G5.

It belongs to the TRAFAC class translation factor GTPase superfamily. Classic translation factor GTPase family. EF-Tu/EF-1A subfamily.

It localises to the cytoplasm. It catalyses the reaction GTP + H2O = GDP + phosphate + H(+). Its function is as follows. GTP hydrolase that promotes the GTP-dependent binding of aminoacyl-tRNA to the A-site of ribosomes during protein biosynthesis. In Methanoculleus marisnigri (strain ATCC 35101 / DSM 1498 / JR1), this protein is Elongation factor 1-alpha.